Consider the following 563-residue polypeptide: CDKN2A-interacting protein (563 aa).

A2 is modified (N-acetylalanine). Positions 19–126 constitute an XRN2-binding (XTBD) domain; it reads VETLRCEGET…KVKKRGISSS (108 aa). Disordered regions lie at residues 122 to 289 and 304 to 351; these read GISS…LLGS and SSSE…PSLL. A Phosphoserine modification is found at S124. Residues 147-160 are compositionally biased toward basic and acidic residues; that stretch reads VERDHGKKSAKTDR. Low complexity-rich tracts occupy residues 168 to 216 and 234 to 248; these read SSPS…SSQV and SASF…SMNS. K177 participates in a covalent cross-link: Glycyl lysine isopeptide (Lys-Gly) (interchain with G-Cter in SUMO1). S234 carries the phosphoserine modification. Polar residues predominate over residues 249 to 262; it reads HMTQSTDNRQQSGS. Low complexity predominate over residues 270 to 280; it reads GSSGSASQSSS. At T340 the chain carries Phosphothreonine. S371 carries the post-translational modification Phosphoserine. One can recognise a DRBM domain in the interval 445-520; it reads NHGELLNAAI…SREALKLFLK (76 aa).

Belongs to the CARF family. As to quaternary structure, interacts with CDKN2A/p14ARF, p53/TP53 and MDM2. Interacts with CHEK2 and MAPK3. Interacts with XRN2. May be ubiquitinated.

Its subcellular location is the nucleus. It localises to the nucleoplasm. Functionally, regulates DNA damage response and cell proliferation in a dose-dependent manner through a number of signaling pathways involved in cell proliferation, apoptosis and senescence. The chain is CDKN2A-interacting protein (Cdkn2aip) from Mus musculus (Mouse).